We begin with the raw amino-acid sequence, 508 residues long: Phytepsin (508 aa).

Residues 1–27 (MGTRGLALALLAAVLLLQTVLPAASEA) form the signal peptide. Residues 28 to 66 (EGLVRIALKKRPIDRNSRVATGLSGGEEQPLLSGANPLR) constitute a propeptide, activation peptide. Residues 84 to 505 (YFGEIGVGTP…DYGKLRIGFA (422 aa)) form the Peptidase A1 domain. The active site involves Asp102. Cystine bridges form between Cys115–Cys121 and Cys280–Cys284. Residue Asp289 is part of the active site. The region spanning 314-419 (VVSQECKTIV…NQLCNRLPSP (106 aa)) is the Saposin B-type domain. 4 disulfides stabilise this stretch: Cys319–Cys413, Cys344–Cys385, Cys350–Cys382, and Cys427–Cys464. An N-linked (GlcNAc...) asparagine glycan is attached at Asn399.

It belongs to the peptidase A1 family. In terms of assembly, heterodimer of two subunits (29 kDa and 11 kDa) processed from the precursor molecule. A large enzyme (32 kDa and 16 kDa) is an intermediate precursor form. Embryo and leaf.

Its subcellular location is the vacuole. It carries out the reaction Prefers hydrophobic residues Phe, Val, Ile, Leu, and Ala at P1 and P1', but also cleaves -Phe-|-Asp- and -Asp-|-Asp- bonds in 2S albumin from plant seeds.. Functionally, involved in the breakdown of propeptides of storage proteins in protein-storage vacuoles. The chain is Phytepsin from Hordeum vulgare (Barley).